Consider the following 138-residue polypeptide: Protein NrdI (138 aa).

This sequence belongs to the NrdI family.

Probably involved in ribonucleotide reductase function. This Beutenbergia cavernae (strain ATCC BAA-8 / DSM 12333 / CCUG 43141 / JCM 11478 / NBRC 16432 / NCIMB 13614 / HKI 0122) protein is Protein NrdI.